Reading from the N-terminus, the 1318-residue chain is DNA-directed RNA polymerase subunit beta' (1318 aa).

Zn(2+) is bound by residues Cys221, Cys295, Cys302, and Cys305.

The protein belongs to the RNA polymerase beta' chain family. RpoC2 subfamily. In terms of assembly, in cyanobacteria the RNAP catalytic core is composed of 2 alpha, 1 beta, 1 beta', 1 gamma and 1 omega subunit. When a sigma factor is associated with the core the holoenzyme is formed, which can initiate transcription. Requires Zn(2+) as cofactor.

The enzyme catalyses RNA(n) + a ribonucleoside 5'-triphosphate = RNA(n+1) + diphosphate. Its function is as follows. DNA-dependent RNA polymerase catalyzes the transcription of DNA into RNA using the four ribonucleoside triphosphates as substrates. The protein is DNA-directed RNA polymerase subunit beta' of Synechococcus sp. (strain ATCC 27144 / PCC 6301 / SAUG 1402/1) (Anacystis nidulans).